Consider the following 547-residue polypeptide: MFS-type transporter M6 (547 aa).

Residues 1–45 are disordered; sequence MHRRRRDNLMTPAEMVASMKPPQSLSTEDDDGSRRDSESSADVLK. A helical transmembrane segment spans residues 81–101; that stretch reads VLVVASFAAAISPFSTSTYYP. Asparagine 118 carries an N-linked (GlcNAc...) asparagine glycan. Residues 146-166 traverse the membrane as a helical segment; sequence PMFLVCFAIYFVANVGLALQN. Asparagine 167 carries an N-linked (GlcNAc...) asparagine glycan. The next 2 membrane-spanning stretches (helical) occupy residues 206-226 and 236-256; these read LIYATLGSTLGPFLGPVIGGL and VFWFLLCMGTVFALLIFIFFG. The N-linked (GlcNAc...) asparagine glycan is linked to asparagine 274. A run of 5 helical transmembrane segments spans residues 317–337, 347–367, 407–427, 432–452, and 469–489; these read FILSVSGGLLYAGYSSVTSVL, YDAVQVGLCYLPVGFGSLLAY, LGFVFPMILVCSVLLVAYGWQ, APLAPILVTMFLIAIILTGVM, and AVGAAMNLTRLLLGAGAVAVV. N-linked (GlcNAc...) asparagine glycosylation is present at asparagine 493. The helical transmembrane segment at 496 to 516 threads the bilayer; the sequence is AGIGWTATVTAGLWVLMMPTL.

This sequence belongs to the major facilitator superfamily. CAR1 family.

It localises to the membrane. Functionally, MFS-type transporter; part of the gene cluster that mediates the biosynthesis of squalestatin S1 (SQS1, also known as zaragozic acid A), a heavily oxidized fungal polyketide that offers potent cholesterol lowering activity by targeting squalene synthase (SS). The chain is MFS-type transporter M6 from Phoma sp. (strain ATCC 20986 / MF5453).